A 408-amino-acid polypeptide reads, in one-letter code: Phosphoglycerate kinase (408 aa).

Residues 24 to 26 (DIN), arginine 40, 63 to 66 (HQGR), arginine 120, and arginine 160 each bind substrate. Residues glutamate 331 and 357–360 (GGHM) each bind ATP.

It belongs to the phosphoglycerate kinase family.

The protein resides in the cytoplasm. The enzyme catalyses (2R)-3-phosphoglycerate + ATP = (2R)-3-phospho-glyceroyl phosphate + ADP. It participates in carbohydrate degradation; glycolysis; pyruvate from D-glyceraldehyde 3-phosphate: step 2/5. This Saccharolobus solfataricus (strain ATCC 35092 / DSM 1617 / JCM 11322 / P2) (Sulfolobus solfataricus) protein is Phosphoglycerate kinase (pgk).